The following is an 84-amino-acid chain: Small ribosomal subunit protein bS18A (84 aa).

Belongs to the bacterial ribosomal protein bS18 family. As to quaternary structure, part of the 30S ribosomal subunit. Forms a tight heterodimer with protein bS6.

Binds as a heterodimer with protein bS6 to the central domain of the 16S rRNA, where it helps stabilize the platform of the 30S subunit. The polypeptide is Small ribosomal subunit protein bS18A (Frankia alni (strain DSM 45986 / CECT 9034 / ACN14a)).